The primary structure comprises 138 residues: Putative pre-16S rRNA nuclease (138 aa).

Belongs to the YqgF nuclease family.

The protein resides in the cytoplasm. Could be a nuclease involved in processing of the 5'-end of pre-16S rRNA. This chain is Putative pre-16S rRNA nuclease, found in Carboxydothermus hydrogenoformans (strain ATCC BAA-161 / DSM 6008 / Z-2901).